Consider the following 976-residue polypeptide: Probable outer membrane protein PmpA (976 aa).

Residues 1-50 (MNQVIKTIALCYQKYISRASNKTFSIHNTLSLSLLPKCLLGSLIIYTSHA) form the signal peptide. In terms of domain architecture, Autotransporter spans 671–976 (GNAIPNSLWS…SLSCGGYVGF (306 aa)).

This sequence belongs to the PMP outer membrane protein family.

Its subcellular location is the secreted. The protein resides in the cell wall. It localises to the cell outer membrane. This is Probable outer membrane protein PmpA (pmpA) from Chlamydia muridarum (strain MoPn / Nigg).